The chain runs to 185 residues: MAPKGGPKQQSEEDLLLQDFSRNLSAKSSALFFGNAFIVSAIPIWLYWRIWHMDLIQSAVLYSVMTLVSTYLVAFAYKNVKFVLKHKVAQKREDAVSKEVTRKLSEADNRKMSRKEKDERILWKKNEVADYEATTFSIFYNNTLFLVLVIVASFFILKNFNPTVNYILSISASSGLIALLSTGSK.

M1 is modified (N-acetylmethionine). Residues M1–K27 are Lumenal-facing. Phosphoserine is present on S11. The chain crosses the membrane as a helical span at residues S28–W48. Residues R49 to D54 lie on the Cytoplasmic side of the membrane. A helical membrane pass occupies residues L55–A76. The Lumenal segment spans residues Y77–T135. At S105 the chain carries Phosphoserine. A helical transmembrane segment spans residues F136–L157. Residues K158–T163 are Cytoplasmic-facing. A helical membrane pass occupies residues V164–S184.

The protein belongs to the TRAP-gamma family. Heterotetramer of TRAP-alpha, TRAP-beta, TRAP-delta and TRAP-gamma.

It is found in the endoplasmic reticulum membrane. TRAP proteins are part of a complex whose function is to bind calcium to the ER membrane and thereby regulate the retention of ER resident proteins. This is Translocon-associated protein subunit gamma (SSR3) from Bos taurus (Bovine).